Here is a 193-residue protein sequence, read N- to C-terminus: MSFELPALPYAKDALAPHISAETIEYHYGKHHQTYVTNLNNLIKGTAFEGKSLEEIIRSSEGGVFNNAAQVWNHTFYWNCLAPNAGGEPTGKVAEAIAASFGSFADFKAQFTDAAIKNFGSGWTWLVKNSDGKLAIVSTSNAGTPLTTDATPLLTVDVWEHAYYIDYRNARPGYLEHFWALVNWEFVAKNLAA.

Fe cation is bound at residue His-27. At Lys-51 the chain carries N6-acetyllysine. The Fe cation site is built by His-74, Asp-157, and His-161.

It belongs to the iron/manganese superoxide dismutase family. In terms of assembly, homodimer. The cofactor is Fe cation.

It catalyses the reaction 2 superoxide + 2 H(+) = H2O2 + O2. Its function is as follows. Destroys superoxide anion radicals which are normally produced within the cells and which are toxic to biological systems. This chain is Superoxide dismutase [Fe] (sodB), found in Escherichia coli O157:H7.